Here is a 130-residue protein sequence, read N- to C-terminus: Small ribosomal subunit protein uS8 (130 aa).

Belongs to the universal ribosomal protein uS8 family. As to quaternary structure, part of the 30S ribosomal subunit. Contacts proteins S5 and S12.

Functionally, one of the primary rRNA binding proteins, it binds directly to 16S rRNA central domain where it helps coordinate assembly of the platform of the 30S subunit. This Aeromonas salmonicida (strain A449) protein is Small ribosomal subunit protein uS8.